Here is a 280-residue protein sequence, read N- to C-terminus: 2,3,4,5-tetrahydropyridine-2,6-dicarboxylate N-succinyltransferase (280 aa).

Substrate is bound by residues Arg107 and Asp144.

It belongs to the transferase hexapeptide repeat family. As to quaternary structure, homotrimer.

The protein localises to the cytoplasm. It carries out the reaction (S)-2,3,4,5-tetrahydrodipicolinate + succinyl-CoA + H2O = (S)-2-succinylamino-6-oxoheptanedioate + CoA. It functions in the pathway amino-acid biosynthesis; L-lysine biosynthesis via DAP pathway; LL-2,6-diaminopimelate from (S)-tetrahydrodipicolinate (succinylase route): step 1/3. The chain is 2,3,4,5-tetrahydropyridine-2,6-dicarboxylate N-succinyltransferase from Granulibacter bethesdensis (strain ATCC BAA-1260 / CGDNIH1).